A 163-amino-acid polypeptide reads, in one-letter code: IQ domain-containing protein F2 (163 aa).

IQ domains lie at 42–71 (RVIA…STWI) and 98–127 (RERA…AIYV).

The polypeptide is IQ domain-containing protein F2 (IQCF2) (Bos taurus (Bovine)).